The following is a 431-amino-acid chain: Trigger factor (431 aa).

One can recognise a PPIase FKBP-type domain in the interval 163–248 (GHFAVIDFTG…LSEIKVKELP (86 aa)).

It belongs to the FKBP-type PPIase family. Tig subfamily.

It localises to the cytoplasm. The catalysed reaction is [protein]-peptidylproline (omega=180) = [protein]-peptidylproline (omega=0). Its function is as follows. Involved in protein export. Acts as a chaperone by maintaining the newly synthesized protein in an open conformation. Functions as a peptidyl-prolyl cis-trans isomerase. In Geobacter sulfurreducens (strain ATCC 51573 / DSM 12127 / PCA), this protein is Trigger factor.